A 357-amino-acid chain; its full sequence is tRNA N6-adenosine threonylcarbamoyltransferase (357 aa).

The Fe cation site is built by His116 and His120. Residues 139 to 143 (LVSGG), Asp172, Gly185, and Asn284 contribute to the substrate site. Residue Asp312 participates in Fe cation binding.

It belongs to the KAE1 / TsaD family. The cofactor is Fe(2+).

Its subcellular location is the cytoplasm. It carries out the reaction L-threonylcarbamoyladenylate + adenosine(37) in tRNA = N(6)-L-threonylcarbamoyladenosine(37) in tRNA + AMP + H(+). Its function is as follows. Required for the formation of a threonylcarbamoyl group on adenosine at position 37 (t(6)A37) in tRNAs that read codons beginning with adenine. Is involved in the transfer of the threonylcarbamoyl moiety of threonylcarbamoyl-AMP (TC-AMP) to the N6 group of A37, together with TsaE and TsaB. TsaD likely plays a direct catalytic role in this reaction. The sequence is that of tRNA N6-adenosine threonylcarbamoyltransferase from Synechococcus sp. (strain CC9605).